A 267-amino-acid polypeptide reads, in one-letter code: Levodione reductase (267 aa).

17–42 is an NAD(+) binding site; it reads LITGGGSGLGRATAVRLAAEGAKLSL. Ser152 contributes to the substrate binding site. The active-site Proton acceptor is Tyr165.

The protein belongs to the short-chain dehydrogenases/reductases (SDR) family.

The enzyme catalyses (4R)-hydroxy-(6R)-2,2,6-trimethylcyclohexanone + NAD(+) = (6R)-2,2,6-trimethyl-1,4-cyclohexanedione + NADH + H(+). Its activity is regulated as follows. Strongly activated by monovalent cations, such as K(+), Na(+), and NH4(+). Functionally, catalyzes the regio- and stereoselective reversible NAD-dependent reduction of (6R)-2,2,6-trimethyl-1,4-cyclohexanedione (levodione) to (4R,6R)-4-hydroxy-2,2,6-trimethylcyclohexanone (actinol). This Leifsonia aquatica (Corynebacterium aquaticum) protein is Levodione reductase (lvr).